The sequence spans 248 residues: Transcription factor bHLH35 (248 aa).

Positions 37–54 are enriched in low complexity; the sequence is SGSYDSSSPDGAASSPAS. Residues 37–60 form a disordered region; it reads SGSYDSSSPDGAASSPASKNIVSE. Residues 51 to 100 form the bHLH domain; sequence SPASKNIVSERNRRQKLNQRLFALRSVVPNITKMDKASIIKDAISYIEGL.

As to quaternary structure, homodimer. In terms of tissue distribution, expressed constitutively in roots, leaves, stems, and flowers.

It localises to the nucleus. This chain is Transcription factor bHLH35 (BHLH35), found in Arabidopsis thaliana (Mouse-ear cress).